Here is a 482-residue protein sequence, read N- to C-terminus: Thymidine phosphorylase (482 aa).

Residues 1–10 (MAALMTPGTG) constitute a propeptide that is removed on maturation. The tract at residues 1-36 (MAALMTPGTGAPPAPGDFSGEGSQGLPDPSPEPKQL) is disordered. T6 is modified (phosphothreonine). Substrate-binding residues include H116, R202, S217, and K221. R-V-A-A-A-L-X(5,6)-L-G-R repeat units follow at residues 265–279 (RVAAALTAMDKPLGR) and 329–342 (RVAAALDDGSALGR). R-A-L-X-X-A-L-V-L repeat units lie at residues 393 to 401 (RALPLALVL) and 453 to 461 (RALQEALVL).

It belongs to the thymidine/pyrimidine-nucleoside phosphorylase family. In terms of assembly, homodimer.

The enzyme catalyses thymidine + phosphate = 2-deoxy-alpha-D-ribose 1-phosphate + thymine. Its pathway is pyrimidine metabolism; dTMP biosynthesis via salvage pathway; dTMP from thymine: step 1/2. Functionally, may have a role in maintaining the integrity of the blood vessels. Has growth promoting activity on endothelial cells, angiogenic activity in vivo and chemotactic activity on endothelial cells in vitro. Its function is as follows. Catalyzes the reversible phosphorolysis of thymidine. The produced molecules are then utilized as carbon and energy sources or in the rescue of pyrimidine bases for nucleotide synthesis. This Homo sapiens (Human) protein is Thymidine phosphorylase.